Reading from the N-terminus, the 564-residue chain is Major facilitator superfamily transporter MPN_076 (564 aa).

12 helical membrane passes run 1-21 (MLWAIVLLGYLLFVVEWFVID), 65-85 (ITLLRAVGSVLCGIVVLKFGY), 89-109 (VMIMMGLMCLCFPFLIIGDPL), 176-196 (IAGYALFIIFRSTIAIGGTTL), 220-240 (NLWGFNSGIVVAFVPFLFQSV), 249-269 (VFILTALILIGFGILCVFAWF), 306-326 (MIGMYGICLVVLVNPLTGGWW), 358-378 (AGLPTLAILWVLGYGMGYMVF), 404-424 (IVIVLFAATLGVGTAVGFAFV), 425-445 (AIATFIGGSFAWSMQSTILIL), 457-477 (VSVLFGYIWGFGYVIYTAFDI), and 501-521 (GAIAGVALFAGLLLAAIAIVV).

It belongs to the major facilitator superfamily.

The protein localises to the cell membrane. This Mycoplasma pneumoniae (strain ATCC 29342 / M129 / Subtype 1) (Mycoplasmoides pneumoniae) protein is Major facilitator superfamily transporter MPN_076.